The following is a 690-amino-acid chain: Secreted LysM effector Vd5LysM (690 aa).

N-linked (GlcNAc...) asparagine glycans are attached at residues Asn-4 and Asn-69. LysM domains lie at 203-248 (TQYT…SLCI), 253-301 (DTVT…TLCI), and 341-387 (RWYN…SYCV). N-linked (GlcNAc...) asparagine glycosylation is found at Asn-260, Asn-295, Asn-375, Asn-410, Asn-423, and Asn-492. A disordered region spans residues 523 to 546 (PATATTGDGGPTPPAPTHSGQPQD). Positions 549 to 596 (TWHVVSSGDSCQSVADDAGISRDQFHDWNPAVGRDCSTNFWLGQAYCV) constitute a LysM 4 domain. Residues 606-619 (STVASSTTSSVTPG) are compositionally biased toward low complexity. A disordered region spans residues 606-636 (STVASSTTSSVTPGPSKPEPPGPTHTGQPSD). One can recognise a LysM 5 domain in the interval 639–686 (EWDVVETGDTCGSLAESNDISLSQFFDWNPAVSRDCVANFWIGQAYCI).

The protein belongs to the secreted LysM effector family.

Functionally, might have a role in sequestration of chitin oligosaccharides (breakdown products of fungal cell walls that are released during invasion and act as triggers of host immunity) to dampen host defense. Does not play an important role during host colonization. This is Secreted LysM effector Vd5LysM from Verticillium dahliae (strain VdLs.17 / ATCC MYA-4575 / FGSC 10137) (Verticillium wilt).